Reading from the N-terminus, the 379-residue chain is Chaperone protein DnaJ (379 aa).

Positions 5-69 (EYYERLGVDK…QKRAAYDQYG (65 aa)) constitute a J domain. The CR-type zinc-finger motif lies at 141–223 (GVEKQVKYNR…CHGSGHEKVA (83 aa)). The Zn(2+) site is built by Cys-154, Cys-157, Cys-171, Cys-174, Cys-197, Cys-200, Cys-211, and Cys-214. CXXCXGXG motif repeat units follow at residues 154–161 (CHTCDGSG), 171–178 (CHKCGGRG), 197–204 (CDVCHGTG), and 211–218 (CTTCHGSG).

The protein belongs to the DnaJ family. Homodimer. It depends on Zn(2+) as a cofactor.

The protein localises to the cytoplasm. Participates actively in the response to hyperosmotic and heat shock by preventing the aggregation of stress-denatured proteins and by disaggregating proteins, also in an autonomous, DnaK-independent fashion. Unfolded proteins bind initially to DnaJ; upon interaction with the DnaJ-bound protein, DnaK hydrolyzes its bound ATP, resulting in the formation of a stable complex. GrpE releases ADP from DnaK; ATP binding to DnaK triggers the release of the substrate protein, thus completing the reaction cycle. Several rounds of ATP-dependent interactions between DnaJ, DnaK and GrpE are required for fully efficient folding. Also involved, together with DnaK and GrpE, in the DNA replication of plasmids through activation of initiation proteins. The chain is Chaperone protein DnaJ from Lactococcus lactis subsp. cremoris (strain SK11).